The chain runs to 91 residues: MPLHKSAEKRLRQSARRNERNRARKKELKVLLKTVQKLVDTNADKKEVEAAYRSAIQKLDRLGVKRYIHPNKASRKKSQLSRMLNNYMKAE.

A compositionally biased stretch (basic and acidic residues) spans 1 to 21 (MPLHKSAEKRLRQSARRNERN). 2 disordered regions span residues 1–25 (MPLH…RARK) and 70–91 (PNKA…MKAE). A compositionally biased stretch (basic residues) spans 70–79 (PNKASRKKSQ).

Belongs to the bacterial ribosomal protein bS20 family.

Functionally, binds directly to 16S ribosomal RNA. In Chlorobium phaeobacteroides (strain BS1), this protein is Small ribosomal subunit protein bS20.